Reading from the N-terminus, the 202-residue chain is Large ribosomal subunit protein uL4 (202 aa).

The tract at residues 45–71 (HAQKNRSEVSGSGKKPWRQKGTGRARV) is disordered.

The protein belongs to the universal ribosomal protein uL4 family. As to quaternary structure, part of the 50S ribosomal subunit.

Functionally, one of the primary rRNA binding proteins, this protein initially binds near the 5'-end of the 23S rRNA. It is important during the early stages of 50S assembly. It makes multiple contacts with different domains of the 23S rRNA in the assembled 50S subunit and ribosome. In terms of biological role, forms part of the polypeptide exit tunnel. The chain is Large ribosomal subunit protein uL4 from Buchnera aphidicola subsp. Baizongia pistaciae (strain Bp).